The following is a 168-amino-acid chain: Plasma membrane-associated cation-binding protein 2 (168 aa).

Gly-2 carries N-myristoyl glycine lipidation. Repeat copies occupy residues 26 to 30 (VEEEK), 69 to 73 (VEEKK), 94 to 99 (VEEEKK), 103 to 107 (VEEKK), 110 to 115 (VEEEKK), 118 to 122 (VEEKK), and 124 to 129 (VEEEKK). Residues 26–129 (VEEEKPREVE…EKKPVEEEKK (104 aa)) are 7 X 5 AA approximate repeats of V-E-E-K-K. The stretch at 56–77 (EEIIATGEKEIEIVEEKKEEAK) forms a coiled coil. Positions 88–131 (EEKKPAVEEEKKTAPVEEKKPAVEEEKKPAVEEKKPVEEEKKEV) are enriched in basic and acidic residues. The tract at residues 88–168 (EEKKPAVEEE…ETPAAAPQKA (81 aa)) is disordered. The segment covering 152-168 (ETPAKAPETPAAAPQKA) has biased composition (low complexity).

Belongs to the DREPP family. Binds microtubules. Interacts with calcium ion Ca(2+), calmodulin and some phosphatidylinositol phosphates (PtdInsPs) such as phosphatidylinositol 3,5-bisphosphate [PtdIns(3,5)P(2)], PtdIns(4,5)P(2) and PtdIns(3,4,5)P(3). Cu(2+) is required as a cofactor. In terms of tissue distribution, mostly expressed in the expanding cells, specifically in roots (except in root tips) and flowers (at protein level). Also detected in cotyledons, hypocotyls and trichome stalks.

The protein localises to the cell membrane. The protein resides in the cytoplasm. It is found in the cytoskeleton. May be involved in intracellular signaling through interaction with PtdInsPs and calmodulin (CaM); may keep PtdInsPs attached to the plasma membrane until Ca(2+)-CaM reaches a competitive concentration subsequent to an increase triggered by a stimulus, thus leading to PtdInsPs release and subsequent activation of InsPs-dependent signaling cascade. Binds to microtubules and inhibits tubulin polymerization. Regulates directional cell growth and cortical microtubule organization by destabilizing microtubules (e.g. in cotyledon pavement cells). The polypeptide is Plasma membrane-associated cation-binding protein 2 (Arabidopsis thaliana (Mouse-ear cress)).